Reading from the N-terminus, the 365-residue chain is Probable secreted beta-glucosidase UTH1 (365 aa).

The N-terminal stretch at 1–17 (MKLSALLALSASTAVLA) is a signal peptide.

This sequence belongs to the SUN family.

The protein localises to the mitochondrion outer membrane. It is found in the secreted. It localises to the cell wall. Functionally, involved in aging, oxidative stress response, and in the regulation of mitochondrial biogenesis. Inactivation of UTH1 increases life span, leads to higher resistance to heat stress and against hydrogen peroxide, and increases sensitivity to the superoxide radical-generating drug paraquat and to copper. Also required for the selective autophagic degradation of mitochondria (mitophagy) in response to nitrogen starvation. Involved in the remodeling of the cell wall during the various phases of yeast culture development and under various environmental conditions and plays a role in septation. Involved in cell sensitivity to boric acid. This Saccharomyces cerevisiae (strain ATCC 204508 / S288c) (Baker's yeast) protein is Probable secreted beta-glucosidase UTH1 (UTH1).